The chain runs to 180 residues: ATP synthase subunit b 2 (180 aa).

Residues 33 to 53 traverse the membrane as a helical segment; it reads IFWLLVTLVAIYFLLTRVALP.

This sequence belongs to the ATPase B chain family. F-type ATPases have 2 components, F(1) - the catalytic core - and F(0) - the membrane proton channel. F(1) has five subunits: alpha(3), beta(3), gamma(1), delta(1), epsilon(1). F(0) has three main subunits: a(1), b(2) and c(10-14). The alpha and beta chains form an alternating ring which encloses part of the gamma chain. F(1) is attached to F(0) by a central stalk formed by the gamma and epsilon chains, while a peripheral stalk is formed by the delta and b chains.

The protein localises to the cell inner membrane. Functionally, f(1)F(0) ATP synthase produces ATP from ADP in the presence of a proton or sodium gradient. F-type ATPases consist of two structural domains, F(1) containing the extramembraneous catalytic core and F(0) containing the membrane proton channel, linked together by a central stalk and a peripheral stalk. During catalysis, ATP synthesis in the catalytic domain of F(1) is coupled via a rotary mechanism of the central stalk subunits to proton translocation. Its function is as follows. Component of the F(0) channel, it forms part of the peripheral stalk, linking F(1) to F(0). The b'-subunit is a diverged and duplicated form of b found in plants and photosynthetic bacteria. The chain is ATP synthase subunit b 2 (atpF2) from Cereibacter sphaeroides (strain ATCC 17025 / ATH 2.4.3) (Rhodobacter sphaeroides).